The chain runs to 710 residues: Methionine--tRNA ligase (710 aa).

Residues 26-36 carry the 'HIGH' region motif; it reads PYANGQIHIGH. 4 residues coordinate Zn(2+): Cys-157, Cys-160, Cys-170, and Cys-173. Residues 347–351 carry the 'KMSKS' region motif; that stretch reads KMSKS. Lys-350 is an ATP binding site. A tRNA-binding domain is found at 604-710; sequence DFAKIDLRIA…SGAKPGMRVK (107 aa).

This sequence belongs to the class-I aminoacyl-tRNA synthetase family. MetG type 1 subfamily. Homodimer. It depends on Zn(2+) as a cofactor.

Its subcellular location is the cytoplasm. It carries out the reaction tRNA(Met) + L-methionine + ATP = L-methionyl-tRNA(Met) + AMP + diphosphate. In terms of biological role, is required not only for elongation of protein synthesis but also for the initiation of all mRNA translation through initiator tRNA(fMet) aminoacylation. The chain is Methionine--tRNA ligase from Paraburkholderia xenovorans (strain LB400).